A 429-amino-acid polypeptide reads, in one-letter code: Ribosomal RNA small subunit methyltransferase B (429 aa).

S-adenosyl-L-methionine is bound by residues 254–260 (CAAPGGK), D277, D303, and D322. The active-site Nucleophile is C375.

This sequence belongs to the class I-like SAM-binding methyltransferase superfamily. RsmB/NOP family.

It localises to the cytoplasm. It catalyses the reaction cytidine(967) in 16S rRNA + S-adenosyl-L-methionine = 5-methylcytidine(967) in 16S rRNA + S-adenosyl-L-homocysteine + H(+). Specifically methylates the cytosine at position 967 (m5C967) of 16S rRNA. This Cronobacter sakazakii (strain ATCC BAA-894) (Enterobacter sakazakii) protein is Ribosomal RNA small subunit methyltransferase B.